The sequence spans 300 residues: Ribosomal protein L11 methyltransferase (300 aa).

Residues Thr144, Gly165, Asp187, and Asn235 each coordinate S-adenosyl-L-methionine.

Belongs to the methyltransferase superfamily. PrmA family.

The protein resides in the cytoplasm. It carries out the reaction L-lysyl-[protein] + 3 S-adenosyl-L-methionine = N(6),N(6),N(6)-trimethyl-L-lysyl-[protein] + 3 S-adenosyl-L-homocysteine + 3 H(+). Functionally, methylates ribosomal protein L11. This is Ribosomal protein L11 methyltransferase from Prochlorococcus marinus (strain MIT 9515).